The chain runs to 641 residues: NADH-ubiquinone oxidoreductase chain 5 (641 aa).

17 helical membrane passes run 1-21 (MYLT…VIGR), 33-53 (SLSI…IVLL), 59-79 (ITIY…WAFY), 83-103 (ISIT…LYSI), 121-141 (LFTF…MFVG), 175-195 (VGDL…GSSD), 211-231 (ITIV…QLGL), 243-263 (TPVS…YLIL), 276-296 (LICV…TGLF), 303-322 (VIAY…LGLS), 367-387 (ILPF…ALPF), 405-425 (FLVT…ITAF), 453-473 (PLIM…IGYI), 476-496 (KHLS…VGTL), 512-532 (FGVQ…ALIV), 564-584 (WFDN…GGIF), and 621-641 (IPHY…SIFI).

This sequence belongs to the complex I subunit 5 family.

It is found in the mitochondrion inner membrane. The enzyme catalyses a ubiquinone + NADH + 5 H(+)(in) = a ubiquinol + NAD(+) + 4 H(+)(out). In terms of biological role, core subunit of the mitochondrial membrane respiratory chain NADH dehydrogenase (Complex I) that is believed to belong to the minimal assembly required for catalysis. Complex I functions in the transfer of electrons from NADH to the respiratory chain. The immediate electron acceptor for the enzyme is believed to be ubiquinone. This is NADH-ubiquinone oxidoreductase chain 5 (ND5) from Allomyces macrogynus.